The chain runs to 117 residues: MTESFTRRERLRLRRDFLLIFKEGESLQNEYFVVLFRKNGLDYSRLGIVVKRKFGKATRRNKLKRWVREIFRRNKGVIPKGFDIVVIPRKKLSEEFERVDFWTIREKLLNLLKRIEG.

This sequence belongs to the RnpA family. Consists of a catalytic RNA component (M1 or rnpB) and a protein subunit.

It carries out the reaction Endonucleolytic cleavage of RNA, removing 5'-extranucleotides from tRNA precursor.. RNaseP catalyzes the removal of the 5'-leader sequence from pre-tRNA to produce the mature 5'-terminus. It can also cleave other RNA substrates such as 4.5S RNA. The protein component plays an auxiliary but essential role in vivo by binding to the 5'-leader sequence and broadening the substrate specificity of the ribozyme. This chain is Ribonuclease P protein component, found in Thermotoga sp. (strain RQ2).